The sequence spans 494 residues: Putative bifunctional dihydrofolate reductase-thymidylate synthase (494 aa).

Positions 1–167 (MGIGKDGTLP…IKHSFISFVR (167 aa)) constitute a DHFR domain. 2 to 8 (GIGKDGT) is a binding site for NADP(+). Position 16 (Asp16) interacts with substrate. Residues 40–42 (RKT) and 61–64 (LTRS) contribute to the NADP(+) site. Ile103 contributes to the substrate binding site. 104–111 (GGGEILRQ) contributes to the NADP(+) binding site. Thr124 serves as a coordination point for substrate. The segment at 170-494 (KSIAEANDSS…HHKIEMKMAV (325 aa)) is thymidylate synthase. Arg231 lines the dUMP pocket. Cys376 is a catalytic residue. DUMP-binding positions include His377, 395–399 (QRSAD), Asn407, and 437–439 (HVY).

This sequence in the N-terminal section; belongs to the dihydrofolate reductase family. In the C-terminal section; belongs to the thymidylate synthase family.

It carries out the reaction (6S)-5,6,7,8-tetrahydrofolate + NADP(+) = 7,8-dihydrofolate + NADPH + H(+). The catalysed reaction is dUMP + (6R)-5,10-methylene-5,6,7,8-tetrahydrofolate = 7,8-dihydrofolate + dTMP. It participates in cofactor biosynthesis; tetrahydrofolate biosynthesis; 5,6,7,8-tetrahydrofolate from 7,8-dihydrofolate: step 1/1. Functionally, bifunctional enzyme. Involved in de novo dTMP biosynthesis. Key enzyme in folate metabolism. Can play two different roles depending on the source of dihydrofolate: de novo synthesis of tetrahydrofolate or recycling of the dihydrofolate released as one of the end products of the TS catalyzed reaction. Catalyzes an essential reaction for de novo glycine and purine synthesis, DNA precursor synthesis, and for the conversion of dUMP to dTMP. The chain is Putative bifunctional dihydrofolate reductase-thymidylate synthase from Oryza sativa subsp. japonica (Rice).